The primary structure comprises 218 residues: Probable nicotinate-nucleotide adenylyltransferase (218 aa).

It belongs to the NadD family.

It catalyses the reaction nicotinate beta-D-ribonucleotide + ATP + H(+) = deamido-NAD(+) + diphosphate. The protein operates within cofactor biosynthesis; NAD(+) biosynthesis; deamido-NAD(+) from nicotinate D-ribonucleotide: step 1/1. Functionally, catalyzes the reversible adenylation of nicotinate mononucleotide (NaMN) to nicotinic acid adenine dinucleotide (NaAD). This is Probable nicotinate-nucleotide adenylyltransferase from Corynebacterium glutamicum (strain ATCC 13032 / DSM 20300 / JCM 1318 / BCRC 11384 / CCUG 27702 / LMG 3730 / NBRC 12168 / NCIMB 10025 / NRRL B-2784 / 534).